The primary structure comprises 223 residues: MLRRINIVDNPNIGVFILATDDLAVVPYNLLDEKVKLIEETLEVDAVKSSISGCNLIGSLAVANSNGIVVSPHVLDREVKQFEELGLNVATIPGNYTAVGNIVAANDTGAIVSPFLSDEAVKVIEDTLDVNVESTSMVGSDIIGSLITVTNKGFLMDKNATETEVDFARDVFGVEGDIGTVGRGISLVGACSLANSSGAIVAKESTGPEMARVEEALGFLDDL.

This sequence belongs to the eIF-6 family.

Its function is as follows. Binds to the 50S ribosomal subunit and prevents its association with the 30S ribosomal subunit to form the 70S initiation complex. The chain is Translation initiation factor 6 from Methanobrevibacter smithii (strain ATCC 35061 / DSM 861 / OCM 144 / PS).